A 931-amino-acid polypeptide reads, in one-letter code: Bifunctional uridylyltransferase/uridylyl-removing enzyme (931 aa).

The uridylyltransferase stretch occupies residues 1–383 (MDLATTNDAA…RPGTELRRVP (383 aa)). Positions 384-739 (EGDDFIIDNN…VGFDEARGVT (356 aa)) are uridylyl-removing. Positions 499–622 (VDEHLLRCIG…VQSVEQMKLL (124 aa)) constitute an HD domain. ACT domains are found at residues 740 to 822 (ELTI…VVAR) and 851 to 931 (VIEV…QSVG).

It belongs to the GlnD family. The cofactor is Mg(2+).

It catalyses the reaction [protein-PII]-L-tyrosine + UTP = [protein-PII]-uridylyl-L-tyrosine + diphosphate. The enzyme catalyses [protein-PII]-uridylyl-L-tyrosine + H2O = [protein-PII]-L-tyrosine + UMP + H(+). Its activity is regulated as follows. Uridylyltransferase (UTase) activity is inhibited by glutamine, while glutamine activates uridylyl-removing (UR) activity. In terms of biological role, modifies, by uridylylation and deuridylylation, the PII regulatory proteins (GlnB and homologs), in response to the nitrogen status of the cell that GlnD senses through the glutamine level. Under low glutamine levels, catalyzes the conversion of the PII proteins and UTP to PII-UMP and PPi, while under higher glutamine levels, GlnD hydrolyzes PII-UMP to PII and UMP (deuridylylation). Thus, controls uridylylation state and activity of the PII proteins, and plays an important role in the regulation of nitrogen assimilation and metabolism. The sequence is that of Bifunctional uridylyltransferase/uridylyl-removing enzyme from Nitrobacter hamburgensis (strain DSM 10229 / NCIMB 13809 / X14).